The following is a 233-amino-acid chain: Purine nucleoside phosphorylase DeoD-type (233 aa).

His-4 provides a ligand contact to a purine D-ribonucleoside. Phosphate is bound by residues Gly-20, Arg-24, Arg-43, and 87 to 90 (RVGT). Residues 178-180 (EME) and 202-203 (SD) contribute to the a purine D-ribonucleoside site. Asp-203 acts as the Proton donor in catalysis.

Belongs to the PNP/UDP phosphorylase family. In terms of assembly, homohexamer; trimer of homodimers.

The enzyme catalyses a purine D-ribonucleoside + phosphate = a purine nucleobase + alpha-D-ribose 1-phosphate. The catalysed reaction is a purine 2'-deoxy-D-ribonucleoside + phosphate = a purine nucleobase + 2-deoxy-alpha-D-ribose 1-phosphate. Catalyzes the reversible phosphorolytic breakdown of the N-glycosidic bond in the beta-(deoxy)ribonucleoside molecules, with the formation of the corresponding free purine bases and pentose-1-phosphate. This Listeria innocua serovar 6a (strain ATCC BAA-680 / CLIP 11262) protein is Purine nucleoside phosphorylase DeoD-type.